A 345-amino-acid polypeptide reads, in one-letter code: uncharacterized protein (345 aa).

This sequence belongs to the Gfo/Idh/MocA family. Biliverdin reductase subfamily.

This is an uncharacterized protein from Escherichia coli (strain K12).